A 101-amino-acid chain; its full sequence is Movement protein (101 aa).

Residues 30–50 traverse the membrane as a helical segment; it reads EVAILSFVALICFYLLYLWVL. The disordered stretch occupies residues 75–101; that stretch reads VDRSNPIPNIPAPPSQGNPGPFVPGTG.

This sequence belongs to the mastrevirus movement protein family. As to quaternary structure, interacts with the capsid protein (CP). Part of a MP-CP-viral DNA complex.

The protein localises to the host membrane. In terms of biological role, involved in the viral transport within, and between cells. The polypeptide is Movement protein (Maize streak virus genotype A (isolate Kenya) (MSV)).